Reading from the N-terminus, the 49-residue chain is MAVPKRRNSKTRGAKRRTHYKIKLSSVIKCSNCGAYKRPHRVCPSCGEY.

The protein belongs to the bacterial ribosomal protein bL32 family.

This chain is Large ribosomal subunit protein bL32, found in Nautilia profundicola (strain ATCC BAA-1463 / DSM 18972 / AmH).